The primary structure comprises 716 residues: Fatty acid oxidation complex subunit alpha (716 aa).

The interval 1–189 is enoyl-CoA hydratase/isomerase; sequence MIYQSPTIQV…KVGAVDAVVA (189 aa). Position 296 (D296) interacts with substrate. A 3-hydroxyacyl-CoA dehydrogenase region spans residues 311 to 716; sequence KEVNNAAVLG…AANNGSYYQA (406 aa). NAD(+) contacts are provided by residues M324, D343, 400 to 402, K407, and S429; that span reads VVE. H450 (for 3-hydroxyacyl-CoA dehydrogenase activity) is an active-site residue. NAD(+) is bound at residue N453. Substrate contacts are provided by N500 and Y660.

In the N-terminal section; belongs to the enoyl-CoA hydratase/isomerase family. It in the C-terminal section; belongs to the 3-hydroxyacyl-CoA dehydrogenase family. As to quaternary structure, heterotetramer of two alpha chains (FadB) and two beta chains (FadA).

The catalysed reaction is a (3S)-3-hydroxyacyl-CoA + NAD(+) = a 3-oxoacyl-CoA + NADH + H(+). It catalyses the reaction a (3S)-3-hydroxyacyl-CoA = a (2E)-enoyl-CoA + H2O. The enzyme catalyses a 4-saturated-(3S)-3-hydroxyacyl-CoA = a (3E)-enoyl-CoA + H2O. It carries out the reaction (3S)-3-hydroxybutanoyl-CoA = (3R)-3-hydroxybutanoyl-CoA. The catalysed reaction is a (3Z)-enoyl-CoA = a 4-saturated (2E)-enoyl-CoA. It catalyses the reaction a (3E)-enoyl-CoA = a 4-saturated (2E)-enoyl-CoA. It functions in the pathway lipid metabolism; fatty acid beta-oxidation. In terms of biological role, involved in the aerobic and anaerobic degradation of long-chain fatty acids via beta-oxidation cycle. Catalyzes the formation of 3-oxoacyl-CoA from enoyl-CoA via L-3-hydroxyacyl-CoA. It can also use D-3-hydroxyacyl-CoA and cis-3-enoyl-CoA as substrate. The protein is Fatty acid oxidation complex subunit alpha of Shewanella baltica (strain OS195).